We begin with the raw amino-acid sequence, 219 residues long: MNRIFGKSKPKVPPPTLTDCITNVDGRAESIEKKISRLDAELIKYKDQMKKMREGPSKNMVKQKALRVLKQKRMYEQQRDNLNQQSFNMEQANYTIQTLKDTKTTVDAMKVGAKEMKKAYKQVKIDQIEDLQDQLEDMMENANEIQEALSRSYGTPEIDEDDLEAELDALGDELLLDDDTSYLDEAASAPAIPEGVPNDSKNKDGVLVDEFGLPQIPAT.

The stretch at 22–153 (TNVDGRAESI…EIQEALSRSY (132 aa)) forms a coiled coil.

Belongs to the SNF7 family. As to quaternary structure, probable peripherally associated component of the endosomal sorting required for transport complex III (ESCRT-III).

It is found in the cytoplasm. The protein resides in the cytosol. It localises to the endosome membrane. Functionally, probable peripherally associated component of the endosomal sorting required for transport complex III (ESCRT-III) which is involved in multivesicular bodies (MVBs) formation and sorting of endosomal cargo proteins into MVBs. MVBs contain intraluminal vesicles (ILVs) that are generated by invagination and scission from the limiting membrane of the endosome and mostly are delivered to lysosomes enabling degradation of membrane proteins, such as stimulated growth factor receptors, lysosomal enzymes and lipids. This is Charged multivesicular body protein 5 (chmp5) from Xenopus laevis (African clawed frog).